An 831-amino-acid chain; its full sequence is Multiphosphoryl transfer protein (831 aa).

Residues 1-90 (MLTIQFLCPL…EYIQVRFIDS (90 aa)) form the HPr domain. The active-site Pros-phosphohistidine intermediate; for HPr activity is the H15. Position 15 is a phosphohistidine; by EI (H15). Residues 119 to 650 (GNVLASGVGV…AVKSQLRQLD (532 aa)) are PTS EI. H298 functions as the Tele-phosphohistidine intermediate; for PTS EI activity in the catalytic mechanism. A Phosphohistidine; by autocatalysis modification is found at H298. Phosphoenolpyruvate is bound by residues R405 and R441. E540 and D564 together coordinate Mg(2+). Residues 563-564 (ND) and R574 each bind phosphoenolpyruvate. The active-site Proton donor; for EI activity is C611. The PTS EIIA type-2 domain maps to 685–828 (PLLALENIFV…QSILTLLETE (144 aa)). H747 acts as the Tele-phosphohistidine intermediate; for PTS EIIA activity in catalysis. At H747 the chain carries Phosphohistidine; by HPr.

Belongs to the PEP-utilizing enzyme family. It depends on Mg(2+) as a cofactor.

The protein localises to the cytoplasm. It carries out the reaction L-histidyl-[protein] + phosphoenolpyruvate = N(pros)-phospho-L-histidyl-[protein] + pyruvate. It catalyses the reaction D-fructose(out) + N(pros)-phospho-L-histidyl-[protein] = D-fructose 1-phosphate(in) + L-histidyl-[protein]. Its function is as follows. Multifunctional protein that includes general (non sugar-specific) and sugar-specific components of the phosphoenolpyruvate-dependent sugar phosphotransferase system (sugar PTS). This major carbohydrate active transport system catalyzes the phosphorylation of incoming sugar substrates concomitantly with their translocation across the cell membrane. The enzyme II FryABC PTS system is involved in fructose transport. The chain is Multiphosphoryl transfer protein (fryA) from Escherichia coli O6:H1 (strain CFT073 / ATCC 700928 / UPEC).